Reading from the N-terminus, the 432-residue chain is GRAM domain-containing protein 2B (432 aa).

N-acetylmethionine is present on M1. 2 disordered regions span residues 1-61 (MTEL…SPDQ) and 74-106 (DGASLASDKNDCKTESKNDPKTERKKSSSSSQY). Composition is skewed to basic and acidic residues over residues 9–39 (EDTKPAKVLGKRESKLGSAHSEAENGVEEKK) and 81–99 (DKNDCKTESKNDPKTERKK). The 68-residue stretch at 110-177 (MHFHKLFLSV…FSVTLIKKTK (68 aa)) folds into the GRAM domain. The segment covering 220 to 233 (TSVGNSPNPSSAEN) has biased composition (polar residues). Residues 220–239 (TSVGNSPNPSSAENSFRADR) form a disordered region. Phosphoserine is present on residues S225, S242, and S252. The segment at 262–285 (RQDMEGYSSSGSQTPESENSRDFH) is disordered. A compositionally biased stretch (polar residues) spans 268 to 278 (YSSSGSQTPES).

The chain is GRAM domain-containing protein 2B (GRAMD2B) from Homo sapiens (Human).